Here is a 209-residue protein sequence, read N- to C-terminus: Uracil phosphoribosyltransferase (209 aa).

Residues R79, R104, and 131–139 each bind 5-phospho-alpha-D-ribose 1-diphosphate; that span reads DPMLATGGS. Uracil contacts are provided by residues I194 and 199–201; that span reads GDA. D200 is a 5-phospho-alpha-D-ribose 1-diphosphate binding site.

The protein belongs to the UPRTase family. Requires Mg(2+) as cofactor.

It carries out the reaction UMP + diphosphate = 5-phospho-alpha-D-ribose 1-diphosphate + uracil. It participates in pyrimidine metabolism; UMP biosynthesis via salvage pathway; UMP from uracil: step 1/1. Allosterically activated by GTP. Functionally, catalyzes the conversion of uracil and 5-phospho-alpha-D-ribose 1-diphosphate (PRPP) to UMP and diphosphate. This Clostridium perfringens (strain ATCC 13124 / DSM 756 / JCM 1290 / NCIMB 6125 / NCTC 8237 / Type A) protein is Uracil phosphoribosyltransferase.